Reading from the N-terminus, the 1247-residue chain is Lon protease homolog 2, peroxisomal (1247 aa).

Positions 22–402 constitute a Lon N-terminal domain; sequence LPTYTLDSNL…LINEMILQLI (381 aa). Disordered stretches follow at residues 76–103, 447–503, and 626–655; these read SGNS…ETYH, TKNR…DVDD, and DQSD…SPTS. The segment covering 459 to 477 has biased composition (low complexity); that stretch reads PGPASSSGPSFSNGKSSPG. Over residues 626–639 the composition is skewed to basic and acidic residues; sequence DQSDKSQPIKDNSK. Residue 721 to 728 participates in ATP binding; it reads GPPGTGKT. The region spanning 989-1230 is the Lon proteolytic domain; it reads TVGVGVVHGL…YDIIKIVWNE (242 aa). Residues Ser-1099 and Lys-1142 contribute to the active site.

Belongs to the peptidase S16 family.

Its subcellular location is the peroxisome matrix. The catalysed reaction is Hydrolysis of proteins in presence of ATP.. ATP-dependent serine protease that mediates the selective degradation of misfolded and unassembled polypeptides in the peroxisomal matrix. Necessary for type 2 peroxisome targeting signal (PTS2)-containing protein processing and facilitates peroxisome matrix protein import. The chain is Lon protease homolog 2, peroxisomal from Candida dubliniensis (strain CD36 / ATCC MYA-646 / CBS 7987 / NCPF 3949 / NRRL Y-17841) (Yeast).